The sequence spans 341 residues: Serine/threonine-protein kinase PDIK1L (341 aa).

The 327-residue stretch at 8–334 (YDLIREVGRG…LELRLVQIAF (327 aa)) folds into the Protein kinase domain. ATP-binding positions include 14 to 22 (VGRGSYGVV) and lysine 37. Aspartate 164 acts as the Proton acceptor in catalysis.

The protein belongs to the protein kinase superfamily. Ser/Thr protein kinase family.

It is found in the nucleus. The catalysed reaction is L-seryl-[protein] + ATP = O-phospho-L-seryl-[protein] + ADP + H(+). It catalyses the reaction L-threonyl-[protein] + ATP = O-phospho-L-threonyl-[protein] + ADP + H(+). The protein is Serine/threonine-protein kinase PDIK1L (Pdik1l) of Mus musculus (Mouse).